Consider the following 130-residue polypeptide: Protein ApaG (130 aa).

The ApaG domain maps to 3-127 (RALTRDIEVT…FSLDSPGLMR (125 aa)).

The protein is Protein ApaG of Agrobacterium fabrum (strain C58 / ATCC 33970) (Agrobacterium tumefaciens (strain C58)).